The sequence spans 43 residues: Neurotrophic factor BDNF (43 aa).

This sequence belongs to the NGF-beta family.

It is found in the secreted. Functionally, promotes the survival of neuronal populations that are all located either in the central nervous system or directly connected to it. The polypeptide is Neurotrophic factor BDNF (bdnf) (Raja clavata (Thornback ray)).